Reading from the N-terminus, the 397-residue chain is Formate-dependent phosphoribosylglycinamide formyltransferase (397 aa).

Residues 21-22 (EL) and glutamate 81 contribute to the N(1)-(5-phospho-beta-D-ribosyl)glycinamide site. ATP-binding positions include arginine 113, lysine 154, 194–197 (EEFV), and glutamate 202. Residues 118-312 (RFAAEKLKLP…EFQIHVRSAI (195 aa)) enclose the ATP-grasp domain. Residues glutamate 271 and glutamate 283 each contribute to the Mg(2+) site. N(1)-(5-phospho-beta-D-ribosyl)glycinamide contacts are provided by residues aspartate 290, lysine 361, and 368–369 (RR).

Belongs to the PurK/PurT family. As to quaternary structure, homodimer.

It catalyses the reaction N(1)-(5-phospho-beta-D-ribosyl)glycinamide + formate + ATP = N(2)-formyl-N(1)-(5-phospho-beta-D-ribosyl)glycinamide + ADP + phosphate + H(+). It participates in purine metabolism; IMP biosynthesis via de novo pathway; N(2)-formyl-N(1)-(5-phospho-D-ribosyl)glycinamide from N(1)-(5-phospho-D-ribosyl)glycinamide (formate route): step 1/1. Involved in the de novo purine biosynthesis. Catalyzes the transfer of formate to 5-phospho-ribosyl-glycinamide (GAR), producing 5-phospho-ribosyl-N-formylglycinamide (FGAR). Formate is provided by PurU via hydrolysis of 10-formyl-tetrahydrofolate. This Saccharolobus solfataricus (strain ATCC 35092 / DSM 1617 / JCM 11322 / P2) (Sulfolobus solfataricus) protein is Formate-dependent phosphoribosylglycinamide formyltransferase.